Here is a 94-residue protein sequence, read N- to C-terminus: Evasin P1086 (94 aa).

The N-terminal stretch at 1–28 is a signal peptide; sequence MAFNVITFLQLAVFVVILFNINLHSASA. 3 disulfide bridges follow: Cys48-Cys67, Cys52-Cys69, and Cys63-Cys80. Residue Asn74 is glycosylated (N-linked (GlcNAc...) asparagine).

Its subcellular location is the secreted. Salivary chemokine-binding protein which binds to host chemokines CXCL1, CXCL2, CXCL3, CXCL5, CXCL6, CXCL10, CXCL12 and CXCL13. The chain is Evasin P1086 from Ixodes ricinus (Common tick).